We begin with the raw amino-acid sequence, 399 residues long: CCA-adding enzyme (399 aa).

ATP is bound by residues Gly32 and Arg35. Gly32 and Arg35 together coordinate CTP. Mg(2+) contacts are provided by Asp45 and Asp47. Residues Arg116, Asp159, Arg162, Arg165, and Arg168 each contribute to the ATP site. Residues Arg116, Asp159, Arg162, Arg165, and Arg168 each contribute to the CTP site.

Belongs to the tRNA nucleotidyltransferase/poly(A) polymerase family. Bacterial CCA-adding enzyme type 3 subfamily. In terms of assembly, homodimer. Mg(2+) is required as a cofactor.

The catalysed reaction is a tRNA precursor + 2 CTP + ATP = a tRNA with a 3' CCA end + 3 diphosphate. It catalyses the reaction a tRNA with a 3' CCA end + 2 CTP + ATP = a tRNA with a 3' CCACCA end + 3 diphosphate. Catalyzes the addition and repair of the essential 3'-terminal CCA sequence in tRNAs without using a nucleic acid template. Adds these three nucleotides in the order of C, C, and A to the tRNA nucleotide-73, using CTP and ATP as substrates and producing inorganic pyrophosphate. tRNA 3'-terminal CCA addition is required both for tRNA processing and repair. Also involved in tRNA surveillance by mediating tandem CCA addition to generate a CCACCA at the 3' terminus of unstable tRNAs. While stable tRNAs receive only 3'-terminal CCA, unstable tRNAs are marked with CCACCA and rapidly degraded. In Streptococcus gordonii (strain Challis / ATCC 35105 / BCRC 15272 / CH1 / DL1 / V288), this protein is CCA-adding enzyme.